A 459-amino-acid chain; its full sequence is Cysteine--tRNA ligase (459 aa).

Residue cysteine 28 coordinates Zn(2+). Residues 30 to 40 carry the 'HIGH' region motif; the sequence is VTIYDLCHIGH. Residues cysteine 209, histidine 234, and glutamate 238 each coordinate Zn(2+). The 'KMSKS' region signature appears at 266-270; sequence KMSKS. Residue lysine 269 coordinates ATP.

The protein belongs to the class-I aminoacyl-tRNA synthetase family. Monomer. Zn(2+) is required as a cofactor.

Its subcellular location is the cytoplasm. It catalyses the reaction tRNA(Cys) + L-cysteine + ATP = L-cysteinyl-tRNA(Cys) + AMP + diphosphate. In Shewanella baltica (strain OS185), this protein is Cysteine--tRNA ligase.